The chain runs to 131 residues: Protein yippee-like PJ691.02 (131 aa).

Positions 12–109 (RCYVCAKCKT…LEMQDAVLQR (98 aa)) constitute a Yippee domain. Zn(2+) contacts are provided by cysteine 16, cysteine 19, cysteine 72, and cysteine 75.

This sequence belongs to the yippee family.

The polypeptide is Protein yippee-like PJ691.02 (Schizosaccharomyces pombe (strain 972 / ATCC 24843) (Fission yeast)).